A 383-amino-acid chain; its full sequence is Histidine decarboxylase (383 aa).

H120 serves as a coordination point for substrate. Position 233 is an N6-(pyridoxal phosphate)lysine (K233).

This sequence belongs to the group II decarboxylase family. As to quaternary structure, homotetramer. The cofactor is pyridoxal 5'-phosphate.

The enzyme catalyses L-histidine + H(+) = histamine + CO2. This is Histidine decarboxylase from Acinetobacter baumannii (strain ATCC 17978 / DSM 105126 / CIP 53.77 / LMG 1025 / NCDC KC755 / 5377).